The following is a 190-amino-acid chain: Holliday junction branch migration complex subunit RuvA (190 aa).

A domain I region spans residues 1–64 (MIGKLTGTLL…EDAQLLYGFG (64 aa)). The tract at residues 65–143 (THSERQAFRE…ADTGAQSLFV (79 aa)) is domain II. A flexible linker region spans residues 144–148 (NNDQN). The interval 148 to 190 (NDIVQALMALGYSDKDAAAALKKLPPDVGVTEGIKLALKALAK) is domain III.

The protein belongs to the RuvA family. In terms of assembly, homotetramer. Forms an RuvA(8)-RuvB(12)-Holliday junction (HJ) complex. HJ DNA is sandwiched between 2 RuvA tetramers; dsDNA enters through RuvA and exits via RuvB. An RuvB hexamer assembles on each DNA strand where it exits the tetramer. Each RuvB hexamer is contacted by two RuvA subunits (via domain III) on 2 adjacent RuvB subunits; this complex drives branch migration. In the full resolvosome a probable DNA-RuvA(4)-RuvB(12)-RuvC(2) complex forms which resolves the HJ.

The protein resides in the cytoplasm. The RuvA-RuvB-RuvC complex processes Holliday junction (HJ) DNA during genetic recombination and DNA repair, while the RuvA-RuvB complex plays an important role in the rescue of blocked DNA replication forks via replication fork reversal (RFR). RuvA specifically binds to HJ cruciform DNA, conferring on it an open structure. The RuvB hexamer acts as an ATP-dependent pump, pulling dsDNA into and through the RuvAB complex. HJ branch migration allows RuvC to scan DNA until it finds its consensus sequence, where it cleaves and resolves the cruciform DNA. This chain is Holliday junction branch migration complex subunit RuvA, found in Delftia acidovorans (strain DSM 14801 / SPH-1).